The sequence spans 115 residues: U3-lycotoxin-Ls1k (115 aa).

The N-terminal stretch at 1–20 (MKSVLLFGVLLVTLFSYSSA) is a signal peptide. Residues 21–44 (EMLDDFDQADEDELLSLIEKEEAR) constitute a propeptide that is removed on maturation. 4 cysteine pairs are disulfide-bonded: Cys48/Cys63, Cys55/Cys72, Cys62/Cys87, and Cys74/Cys85.

This sequence belongs to the neurotoxin 19 (CSTX) family. 01 subfamily. Expressed by the venom gland.

Its subcellular location is the secreted. This chain is U3-lycotoxin-Ls1k, found in Lycosa singoriensis (Wolf spider).